We begin with the raw amino-acid sequence, 338 residues long: Cilia- and flagella-associated protein 36 (338 aa).

Positions 142–179 (ISDLEQEEMKLVSEALRLSKEEYEREQLRRSAKELNCT) form a coiled coil. Disordered regions lie at residues 175–220 (ELNC…ESPY) and 281–314 (KKQE…KKSL). Polar residues predominate over residues 187-202 (KQSNGSERTPSNTELP). Residues 255–330 (NLSQAEKEQL…AEKLKEEVIL (76 aa)) are a coiled coil.

It belongs to the CFAP36 family.

It localises to the nucleus. It is found in the cytoplasm. The protein localises to the cell projection. Its subcellular location is the cilium. The protein resides in the flagellum. In Xenopus laevis (African clawed frog), this protein is Cilia- and flagella-associated protein 36.